Consider the following 135-residue polypeptide: Germinal center-associated signaling and motility-like protein (135 aa).

Residues 1–68 (MGNYLLRKLS…ENGSGSEEVC (68 aa)) are disordered. Positions 22–48 (GNPDEERKRQEMTTFERKLQDQDKKSQ) are enriched in basic and acidic residues. A coiled-coil region spans residues 26–50 (EERKRQEMTTFERKLQDQDKKSQEV). The span at 51-66 (SSTSNQENENGSGSEE) shows a compositional bias: low complexity.

This is Germinal center-associated signaling and motility-like protein (GCSAML) from Homo sapiens (Human).